A 223-amino-acid polypeptide reads, in one-letter code: Ribosomal RNA small subunit methyltransferase G (223 aa).

Residues G82, L87, 133 to 134 (AE), and R151 contribute to the S-adenosyl-L-methionine site.

It belongs to the methyltransferase superfamily. RNA methyltransferase RsmG family.

The protein localises to the cytoplasm. Functionally, specifically methylates the N7 position of guanine in position 518 of 16S rRNA. The sequence is that of Ribosomal RNA small subunit methyltransferase G from Corynebacterium glutamicum (strain R).